The chain runs to 442 residues: Adenylosuccinate synthetase (442 aa).

Residues 25–31, 53–55, and K62 each bind GTP; these read GDEGKGK and GHT. The active-site Proton acceptor is the D26. Mg(2+)-binding residues include D26 and G53. IMP-binding positions include 26 to 29 and 51 to 54; these read DEGK and NAGH. The active-site Proton donor is H54. Positions 141, 155, 232, and 247 each coordinate IMP. T307 contributes to the GTP binding site. 307–313 contacts substrate; it reads TTTKRPR. Residue R311 coordinates IMP. Residues R313, 339 to 341, and 425 to 427 contribute to the GTP site; these read KLD and GVG.

The protein belongs to the adenylosuccinate synthetase family. In terms of assembly, homodimer. Mg(2+) is required as a cofactor.

It is found in the cytoplasm. It catalyses the reaction IMP + L-aspartate + GTP = N(6)-(1,2-dicarboxyethyl)-AMP + GDP + phosphate + 2 H(+). Its pathway is purine metabolism; AMP biosynthesis via de novo pathway; AMP from IMP: step 1/2. Its activity is regulated as follows. Inhibited by hadacidin. Activated by fructose 1,6-bisphosphate. Plays an important role in the salvage pathway for purine nucleotide biosynthesis. Catalyzes the first committed step in the biosynthesis of AMP from IMP. The sequence is that of Adenylosuccinate synthetase (Adss) from Plasmodium falciparum.